We begin with the raw amino-acid sequence, 218 residues long: Cytochrome b6 (218 aa).

Residues 35-55 (IFYCLGGITLVCFLIQFATGF) form a helical membrane-spanning segment. Residue Cys-38 coordinates heme c. Heme b is bound by residues His-89 and His-103. The next 3 membrane-spanning stretches (helical) occupy residues 93–113 (ASMM…TGGF), 119–139 (LTWV…VTGY), and 189–209 (LHTF…FLMI). Heme b is bound by residues His-190 and His-205.

Belongs to the cytochrome b family. PetB subfamily. The 4 large subunits of the cytochrome b6-f complex are cytochrome b6, subunit IV (17 kDa polypeptide, PetD), cytochrome f and the Rieske protein, while the 4 small subunits are PetG, PetL, PetM and PetN. The complex functions as a dimer. The cofactor is heme b. Requires heme c as cofactor.

The protein localises to the cellular thylakoid membrane. Its function is as follows. Component of the cytochrome b6-f complex, which mediates electron transfer between photosystem II (PSII) and photosystem I (PSI), cyclic electron flow around PSI, and state transitions. The protein is Cytochrome b6 of Prochlorococcus marinus (strain MIT 9301).